We begin with the raw amino-acid sequence, 334 residues long: Glycerol-3-phosphate dehydrogenase [NAD(P)+] (334 aa).

The NADPH site is built by Y14 and K108. Residues K108, G140, and S142 each coordinate sn-glycerol 3-phosphate. A144 lines the NADPH pocket. Sn-glycerol 3-phosphate-binding residues include K195, D248, S258, R259, and N260. K195 (proton acceptor) is an active-site residue. R259 contributes to the NADPH binding site. E285 contacts NADPH.

Belongs to the NAD-dependent glycerol-3-phosphate dehydrogenase family.

It is found in the cytoplasm. It catalyses the reaction sn-glycerol 3-phosphate + NAD(+) = dihydroxyacetone phosphate + NADH + H(+). The enzyme catalyses sn-glycerol 3-phosphate + NADP(+) = dihydroxyacetone phosphate + NADPH + H(+). The protein operates within membrane lipid metabolism; glycerophospholipid metabolism. Its function is as follows. Catalyzes the reduction of the glycolytic intermediate dihydroxyacetone phosphate (DHAP) to sn-glycerol 3-phosphate (G3P), the key precursor for phospholipid synthesis. This Mesoplasma florum (strain ATCC 33453 / NBRC 100688 / NCTC 11704 / L1) (Acholeplasma florum) protein is Glycerol-3-phosphate dehydrogenase [NAD(P)+].